We begin with the raw amino-acid sequence, 345 residues long: UDP-3-O-acylglucosamine N-acyltransferase (345 aa).

Histidine 241 serves as the catalytic Proton acceptor.

Belongs to the transferase hexapeptide repeat family. LpxD subfamily. Homotrimer.

The enzyme catalyses a UDP-3-O-[(3R)-3-hydroxyacyl]-alpha-D-glucosamine + a (3R)-hydroxyacyl-[ACP] = a UDP-2-N,3-O-bis[(3R)-3-hydroxyacyl]-alpha-D-glucosamine + holo-[ACP] + H(+). Its pathway is bacterial outer membrane biogenesis; LPS lipid A biosynthesis. In terms of biological role, catalyzes the N-acylation of UDP-3-O-acylglucosamine using 3-hydroxyacyl-ACP as the acyl donor. Is involved in the biosynthesis of lipid A, a phosphorylated glycolipid that anchors the lipopolysaccharide to the outer membrane of the cell. The protein is UDP-3-O-acylglucosamine N-acyltransferase of Desulfotalea psychrophila (strain LSv54 / DSM 12343).